We begin with the raw amino-acid sequence, 278 residues long: 4-deoxy-L-threo-5-hexosulose-uronate ketol-isomerase (278 aa).

Positions 196, 198, 203, and 245 each coordinate Zn(2+).

It belongs to the KduI family. Homohexamer. It depends on Zn(2+) as a cofactor.

The catalysed reaction is 5-dehydro-4-deoxy-D-glucuronate = 3-deoxy-D-glycero-2,5-hexodiulosonate. Its pathway is glycan metabolism; pectin degradation; 2-dehydro-3-deoxy-D-gluconate from pectin: step 4/5. Functionally, catalyzes the isomerization of 5-dehydro-4-deoxy-D-glucuronate to 3-deoxy-D-glycero-2,5-hexodiulosonate. The sequence is that of 4-deoxy-L-threo-5-hexosulose-uronate ketol-isomerase from Escherichia coli (strain 55989 / EAEC).